Reading from the N-terminus, the 256-residue chain is Acetyl-coenzyme A carboxylase carboxyl transferase subunit alpha (256 aa).

The 236-residue stretch at M1–Q236 folds into the CoA carboxyltransferase C-terminal domain.

Belongs to the AccA family. In terms of assembly, acetyl-CoA carboxylase is a heterohexamer composed of biotin carboxyl carrier protein (AccB), biotin carboxylase (AccC) and two subunits each of ACCase subunit alpha (AccA) and ACCase subunit beta (AccD).

It localises to the cytoplasm. It carries out the reaction N(6)-carboxybiotinyl-L-lysyl-[protein] + acetyl-CoA = N(6)-biotinyl-L-lysyl-[protein] + malonyl-CoA. It participates in lipid metabolism; malonyl-CoA biosynthesis; malonyl-CoA from acetyl-CoA: step 1/1. Its function is as follows. Component of the acetyl coenzyme A carboxylase (ACC) complex. First, biotin carboxylase catalyzes the carboxylation of biotin on its carrier protein (BCCP) and then the CO(2) group is transferred by the carboxyltransferase to acetyl-CoA to form malonyl-CoA. The polypeptide is Acetyl-coenzyme A carboxylase carboxyl transferase subunit alpha (Streptococcus equi subsp. zooepidemicus (strain MGCS10565)).